A 65-amino-acid chain; its full sequence is Large ribosomal subunit protein bL35 (65 aa).

The disordered stretch occupies residues 1–28 (MPKMKTHRGAAKRFKKTGTGKIKRGQSK).

This sequence belongs to the bacterial ribosomal protein bL35 family.

The protein is Large ribosomal subunit protein bL35 of Acidobacterium capsulatum (strain ATCC 51196 / DSM 11244 / BCRC 80197 / JCM 7670 / NBRC 15755 / NCIMB 13165 / 161).